The chain runs to 222 residues: 7-cyano-7-deazaguanine synthase (222 aa).

Residue 11–21 (FSGGQDSTTCL) participates in ATP binding. Residues C187, C195, C198, and C201 each coordinate Zn(2+).

It belongs to the QueC family. Requires Zn(2+) as cofactor.

The enzyme catalyses 7-carboxy-7-deazaguanine + NH4(+) + ATP = 7-cyano-7-deazaguanine + ADP + phosphate + H2O + H(+). The protein operates within purine metabolism; 7-cyano-7-deazaguanine biosynthesis. In terms of biological role, catalyzes the ATP-dependent conversion of 7-carboxy-7-deazaguanine (CDG) to 7-cyano-7-deazaguanine (preQ(0)). This is 7-cyano-7-deazaguanine synthase from Actinobacillus pleuropneumoniae serotype 7 (strain AP76).